The chain runs to 138 residues: Phosphoribosyl-AMP cyclohydrolase (138 aa).

Asp92 serves as a coordination point for Mg(2+). Cys93 lines the Zn(2+) pocket. Residues Asp94 and Asp96 each coordinate Mg(2+). Zn(2+) is bound by residues Cys109 and Cys116.

This sequence belongs to the PRA-CH family. In terms of assembly, homodimer. The cofactor is Mg(2+). Requires Zn(2+) as cofactor.

The protein resides in the cytoplasm. It catalyses the reaction 1-(5-phospho-beta-D-ribosyl)-5'-AMP + H2O = 1-(5-phospho-beta-D-ribosyl)-5-[(5-phospho-beta-D-ribosylamino)methylideneamino]imidazole-4-carboxamide. It functions in the pathway amino-acid biosynthesis; L-histidine biosynthesis; L-histidine from 5-phospho-alpha-D-ribose 1-diphosphate: step 3/9. Catalyzes the hydrolysis of the adenine ring of phosphoribosyl-AMP. This Clavibacter sepedonicus (Clavibacter michiganensis subsp. sepedonicus) protein is Phosphoribosyl-AMP cyclohydrolase.